The following is a 177-amino-acid chain: MNLLTIFNILPLGEGFGFNDNILETNIINLAAVVGIVVFFVGKNFSILLENRQQTILNNLREANQRASEALERYNQAKKQLELAEKKAKDIRQEGTLKARQEKENCFNQYKLDLVRLEEYKQETLQFYQQKAFQQIYVSIVSRALGEVKQKFNKPLSEQFHATINNFVIARLTEYNP.

Residues 22–42 (ILETNIINLAAVVGIVVFFVG) form a helical membrane-spanning segment.

It belongs to the ATPase B chain family. In terms of assembly, F-type ATPases have 2 components, F(1) - the catalytic core - and F(0) - the membrane proton channel. F(1) has five subunits: alpha(3), beta(3), gamma(1), delta(1), epsilon(1). F(0) has four main subunits: a(1), b(1), b'(1) and c(10-14). The alpha and beta chains form an alternating ring which encloses part of the gamma chain. F(1) is attached to F(0) by a central stalk formed by the gamma and epsilon chains, while a peripheral stalk is formed by the delta, b and b' chains.

The protein localises to the plastid. It is found in the chloroplast thylakoid membrane. In terms of biological role, f(1)F(0) ATP synthase produces ATP from ADP in the presence of a proton or sodium gradient. F-type ATPases consist of two structural domains, F(1) containing the extramembraneous catalytic core and F(0) containing the membrane proton channel, linked together by a central stalk and a peripheral stalk. During catalysis, ATP synthesis in the catalytic domain of F(1) is coupled via a rotary mechanism of the central stalk subunits to proton translocation. Its function is as follows. Component of the F(0) channel, it forms part of the peripheral stalk, linking F(1) to F(0). In Oedogonium cardiacum (Filamentous green alga), this protein is ATP synthase subunit b, chloroplastic.